The chain runs to 86 residues: Putative regulatory protein Desal_2819 (86 aa).

It belongs to the RemA family.

The chain is Putative regulatory protein Desal_2819 from Maridesulfovibrio salexigens (strain ATCC 14822 / DSM 2638 / NCIMB 8403 / VKM B-1763) (Desulfovibrio salexigens).